We begin with the raw amino-acid sequence, 224 residues long: Dimethyl sulfoxide reductase transcriptional activator (224 aa).

Residues 158-209 (LTDKQREAAAAAVAKGYYATPRGADLSDLATALGISKSAVSQRLSAVESKLA) form the HTH bat-type domain.

In terms of biological role, involved in activating dmsEABCD gene expression related to dimethyl sulfoxide (DMSO) reductase. Required for anaerobic respiration on dimethyl sulfoxide (DMSO) and trimethylamine N-oxide (TMAO). The polypeptide is Dimethyl sulfoxide reductase transcriptional activator (dmsR) (Halobacterium salinarum (strain ATCC 700922 / JCM 11081 / NRC-1) (Halobacterium halobium)).